Consider the following 207-residue polypeptide: Superoxide dismutase [Mn] (207 aa).

4 residues coordinate Mn(2+): H28, H76, D160, and H164.

Belongs to the iron/manganese superoxide dismutase family. The cofactor is Mn(2+).

The enzyme catalyses 2 superoxide + 2 H(+) = H2O2 + O2. Functionally, destroys superoxide anion radicals which are normally produced within the cells and which are toxic to biological systems. The protein is Superoxide dismutase [Mn] (sodA) of Mycobacterium intracellulare (strain ATCC 13950 / DSM 43223 / JCM 6384 / NCTC 13025 / 3600).